A 185-amino-acid chain; its full sequence is Ribosome-recycling factor (185 aa).

Belongs to the RRF family.

Its subcellular location is the cytoplasm. Its function is as follows. Responsible for the release of ribosomes from messenger RNA at the termination of protein biosynthesis. May increase the efficiency of translation by recycling ribosomes from one round of translation to another. The sequence is that of Ribosome-recycling factor from Myxococcus xanthus (strain DK1622).